A 230-amino-acid polypeptide reads, in one-letter code: uncharacterized protein (230 aa).

Positions 2 to 69 (HRLAKIISNA…KPRLWIYYKP (68 aa)) constitute an S4 RNA-binding domain. D102 (nucleophile) is an active-site residue.

This sequence belongs to the pseudouridine synthase RsuA family.

The catalysed reaction is a uridine in RNA = a pseudouridine in RNA. This is an uncharacterized protein from Rickettsia conorii (strain ATCC VR-613 / Malish 7).